The primary structure comprises 375 residues: Venom allergen 5 (375 aa).

The signal sequence occupies residues 1-26 (MSAPVGIPSLLLALCALLCVLNAVRS). The SCP domain occupies 66 to 210 (VRLHNNLRSK…RRYTQIVCNY (145 aa)). Residues N300 and N366 are each glycosylated (N-linked (GlcNAc...) asparagine).

The protein belongs to the CRISP family. Venom allergen 5-like subfamily. Contains 9 disulfide bonds. In terms of tissue distribution, expressed by the venom gland.

It is found in the secreted. This is Venom allergen 5 from Lycosa singoriensis (Wolf spider).